The primary structure comprises 633 residues: Heterogeneous nuclear ribonucleoprotein R (633 aa).

Positions 1 to 24 (MANQVNGNAVQLKEEEEPMDTSSV) are disordered. An N-acetylalanine modification is found at Ala2. Residues Lys13 and Lys171 each participate in a glycyl lysine isopeptide (Lys-Gly) (interchain with G-Cter in SUMO2) cross-link. RRM domains lie at 165–244 (TEVF…ISVA), 246–328 (NRLF…WADP), and 341–411 (KVLF…LAKP). Residue Lys359 forms a Glycyl lysine isopeptide (Lys-Gly) (interchain with G-Cter in SUMO2) linkage. Lys366 is modified (N6-acetyllysine). A Nuclear localization signal motif is present at residues 412–418 (PDKKRKE). The segment at 412–456 (PDKKRKERQAARQASRSTAYEDYYYHPPPRMPPPIRGRGRGGGRG) is disordered. The span at 437–446 (HPPPRMPPPI) shows a compositional bias: pro residues. Residues 447 to 567 (RGRGRGGGRG…SRGSRGNRGG (121 aa)) form an RNA-binding RGG-box region. One copy of the 1; approximate repeat lies at 462 to 471 (PDYYGYEDYY). Positions 462-497 (PDYYGYEDYYDDYYGYDYHDYRGGYEDPYYGYDDGY) are 3 X 11 AA approximate repeats of D-D-Y-Y-G-Y-D-Y-H-D-Y. Residues 472–482 (DDYYGYDYHDY) form repeat 2. A 3; approximate repeat occupies 488-497 (DPYYGYDDGY). A compositionally biased stretch (gly residues) spans 501-510 (GRGGGRGGRG). Positions 501-633 (GRGGGRGGRG…YQDTYGQQWK (133 aa)) are disordered. Residues 511 to 524 (APPPPRGRGAPPPR) show a composition bias toward pro residues. Residues 525–541 (GRAGYSQRGAPLGPPRG) are compositionally biased toward low complexity. The segment covering 558 to 570 (SRGSRGNRGGNVG) has biased composition (gly residues). Over residues 588 to 604 (TNNQQNWGSQPIAQQPL) the composition is skewed to polar residues. Residues 605 to 621 (QQGGDYSGNYGYNNDNQ) are compositionally biased toward low complexity. Over residues 622–633 (EFYQDTYGQQWK) the composition is skewed to polar residues.

As to quaternary structure, identified in the spliceosome C complex. Identified in a IGF2BP1-dependent mRNP granule complex containing untranslated mRNAs. Interacts with GTPBP1.

It localises to the nucleus. Its subcellular location is the microsome. It is found in the nucleoplasm. The protein resides in the cytoplasm. Its function is as follows. Component of ribonucleosomes, which are complexes of at least 20 other different heterogeneous nuclear ribonucleoproteins (hnRNP). hnRNP play an important role in processing of precursor mRNA in the nucleus. In Homo sapiens (Human), this protein is Heterogeneous nuclear ribonucleoprotein R (HNRNPR).